We begin with the raw amino-acid sequence, 228 residues long: Large ribosomal subunit protein bL25 (228 aa).

A compositionally biased stretch (polar residues) spans 1 to 10 (MNSLDANTRN). 2 disordered regions span residues 1–20 (MNSL…VRSL) and 187–228 (MKEP…EEKK). The segment covering 202 to 228 (EDGKEAAPAAEGDKKDDGEKKATEEKK) has biased composition (basic and acidic residues).

It belongs to the bacterial ribosomal protein bL25 family. CTC subfamily. In terms of assembly, part of the 50S ribosomal subunit; part of the 5S rRNA/L5/L18/L25 subcomplex. Contacts the 5S rRNA. Binds to the 5S rRNA independently of L5 and L18.

This is one of the proteins that binds to the 5S RNA in the ribosome where it forms part of the central protuberance. The chain is Large ribosomal subunit protein bL25 from Pelagibacter ubique (strain HTCC1062).